Here is a 203-residue protein sequence, read N- to C-terminus: Large ribosomal subunit protein bL25 (203 aa).

This sequence belongs to the bacterial ribosomal protein bL25 family. CTC subfamily. Part of the 50S ribosomal subunit; part of the 5S rRNA/L5/L18/L25 subcomplex. Contacts the 5S rRNA. Binds to the 5S rRNA independently of L5 and L18.

This is one of the proteins that binds to the 5S RNA in the ribosome where it forms part of the central protuberance. This Rickettsia conorii (strain ATCC VR-613 / Malish 7) protein is Large ribosomal subunit protein bL25.